Here is a 199-residue protein sequence, read N- to C-terminus: NAD(P)H dehydrogenase (quinone) (199 aa).

Residues 4 to 190 (VLVLYYSAYG…AGARYQGRQI (187 aa)) enclose the Flavodoxin-like domain. FMN-binding positions include 10–15 (SAYGHI) and 78–80 (TRF). NAD(+) is bound at residue Tyr12. Trp98 contacts substrate. FMN-binding positions include 113–119 (SSATQHG) and His134.

It belongs to the WrbA family. The cofactor is FMN.

It carries out the reaction a quinone + NADH + H(+) = a quinol + NAD(+). The catalysed reaction is a quinone + NADPH + H(+) = a quinol + NADP(+). This is NAD(P)H dehydrogenase (quinone) from Bradyrhizobium diazoefficiens (strain JCM 10833 / BCRC 13528 / IAM 13628 / NBRC 14792 / USDA 110).